The chain runs to 92 residues: Small ribosomal subunit protein uS19 (92 aa).

This sequence belongs to the universal ribosomal protein uS19 family.

Functionally, protein S19 forms a complex with S13 that binds strongly to the 16S ribosomal RNA. This is Small ribosomal subunit protein uS19 from Agrobacterium fabrum (strain C58 / ATCC 33970) (Agrobacterium tumefaciens (strain C58)).